A 99-amino-acid chain; its full sequence is Small ribosomal subunit protein uS14m (99 aa).

This sequence belongs to the universal ribosomal protein uS14 family.

Its subcellular location is the mitochondrion. The polypeptide is Small ribosomal subunit protein uS14m (RPS14) (Acanthamoeba castellanii (Amoeba)).